We begin with the raw amino-acid sequence, 270 residues long: 3-methyl-2-oxobutanoate hydroxymethyltransferase (270 aa).

Mg(2+) contacts are provided by Asp-50 and Asp-89. Residues 50-51, Asp-89, and Lys-118 contribute to the 3-methyl-2-oxobutanoate site; that span reads DS. A Mg(2+)-binding site is contributed by Glu-120. Glu-187 serves as the catalytic Proton acceptor.

The protein belongs to the PanB family. In terms of assembly, homodecamer; pentamer of dimers. Mg(2+) is required as a cofactor.

It is found in the cytoplasm. It catalyses the reaction 3-methyl-2-oxobutanoate + (6R)-5,10-methylene-5,6,7,8-tetrahydrofolate + H2O = 2-dehydropantoate + (6S)-5,6,7,8-tetrahydrofolate. It participates in cofactor biosynthesis; (R)-pantothenate biosynthesis; (R)-pantoate from 3-methyl-2-oxobutanoate: step 1/2. In terms of biological role, catalyzes the reversible reaction in which hydroxymethyl group from 5,10-methylenetetrahydrofolate is transferred onto alpha-ketoisovalerate to form ketopantoate. The chain is 3-methyl-2-oxobutanoate hydroxymethyltransferase from Helicobacter pylori (strain P12).